A 122-amino-acid chain; its full sequence is Large ribosomal subunit protein uL14c (122 aa).

Belongs to the universal ribosomal protein uL14 family. Part of the 50S ribosomal subunit.

It localises to the plastid. The protein localises to the chloroplast. Functionally, binds to 23S rRNA. The sequence is that of Large ribosomal subunit protein uL14c from Populus alba (White poplar).